The chain runs to 565 residues: Ubiquitin carboxyl-terminal hydrolase 21 (565 aa).

Basic and acidic residues-rich tracts occupy residues M1–E14 and P58–R70. Positions M1–G128 are disordered. Positions G71–P81 are enriched in low complexity. Polar residues predominate over residues S104–S116. A Nuclear export signal motif is present at residues E134 to R152. The region spanning V212 to M558 is the USP domain. Catalysis depends on C221, which acts as the Nucleophile. The segment at A324 to P347 is disordered. Zn(2+) contacts are provided by C384, C387, C437, and C440. H518 (proton acceptor) is an active-site residue.

It belongs to the peptidase C19 family. USP21 subfamily. Interacts with BEND3.

It is found in the cytoplasm. The protein localises to the nucleus. The enzyme catalyses Thiol-dependent hydrolysis of ester, thioester, amide, peptide and isopeptide bonds formed by the C-terminal Gly of ubiquitin (a 76-residue protein attached to proteins as an intracellular targeting signal).. Deubiquitinates histone H2A, a specific tag for epigenetic transcriptional repression, thereby acting as a coactivator. Deubiquitination of histone H2A releaves the repression of di- and trimethylation of histone H3 at 'Lys-4', resulting in regulation of transcriptional initiation. Regulates gene expression via histone H2A deubiquitination. Deubiquitinates BAZ2A/TIP5 leading to its stabilization. Also capable of removing NEDD8 from NEDD8 conjugates but has no effect on Sentrin-1 conjugates. Also acts as a negative regulator of the ribosome quality control (RQC) by mediating deubiquitination of 40S ribosomal proteins RPS10/eS10 and RPS20/uS10, thereby antagonizing ZNF598-mediated 40S ubiquitination. This Rattus norvegicus (Rat) protein is Ubiquitin carboxyl-terminal hydrolase 21 (Usp21).